A 548-amino-acid polypeptide reads, in one-letter code: Eukaryotic translation initiation factor 3 subunit D (548 aa).

Lys53 bears the N6-acetyllysine mark. Ser161 carries the post-translational modification Phosphoserine. The segment at 285–299 (DFDLPTVSETANEPP) is RNA gate. Disordered stretches follow at residues 288 to 309 (LPTVSETANEPPQDEGNSFNSP) and 523 to 548 (PDGTFSSDEDEEEEEEEEEEEEEEET). The segment covering 291-309 (VSETANEPPQDEGNSFNSP) has biased composition (polar residues). A phosphoserine mark is found at Ser528 and Ser529. Over residues 529–548 (SDEDEEEEEEEEEEEEEEET) the composition is skewed to acidic residues.

Belongs to the eIF-3 subunit D family. In terms of assembly, component of the eukaryotic translation initiation factor 3 (eIF-3) complex, which is composed of 13 subunits: EIF3A, EIF3B, EIF3C, EIF3D, EIF3E, EIF3F, EIF3G, EIF3H, EIF3I, EIF3J, EIF3K, EIF3L and EIF3M. The eIF-3 complex appears to include 3 stable modules: module A is composed of EIF3A, EIF3B, EIF3G and EIF3I; module B is composed of EIF3F, EIF3H, and EIF3M; and module C is composed of EIF3C, EIF3D, EIF3E, EIF3K and EIF3L. EIF3C of module C binds EIF3B of module A and EIF3H of module B, thereby linking the three modules. EIF3J is a labile subunit that binds to the eIF-3 complex via EIF3B. The eIF-3 complex interacts with RPS6KB1 under conditions of nutrient depletion. Mitogenic stimulation leads to binding and activation of a complex composed of MTOR and RPTOR, leading to phosphorylation and release of RPS6KB1 and binding of EIF4B to eIF-3.

The protein localises to the cytoplasm. In terms of biological role, mRNA cap-binding component of the eukaryotic translation initiation factor 3 (eIF-3) complex, a complex required for several steps in the initiation of protein synthesis of a specialized repertoire of mRNAs. The eIF-3 complex associates with the 40S ribosome and facilitates the recruitment of eIF-1, eIF-1A, eIF-2:GTP:methionyl-tRNAi and eIF-5 to form the 43S pre-initiation complex (43S PIC). The eIF-3 complex stimulates mRNA recruitment to the 43S PIC and scanning of the mRNA for AUG recognition. The eIF-3 complex is also required for disassembly and recycling of post-termination ribosomal complexes and subsequently prevents premature joining of the 40S and 60S ribosomal subunits prior to initiation. The eIF-3 complex specifically targets and initiates translation of a subset of mRNAs involved in cell proliferation, including cell cycling, differentiation and apoptosis, and uses different modes of RNA stem-loop binding to exert either translational activation or repression. In the eIF-3 complex, EIF3D specifically recognizes and binds the 7-methylguanosine cap of a subset of mRNAs. In Pongo abelii (Sumatran orangutan), this protein is Eukaryotic translation initiation factor 3 subunit D.